The chain runs to 772 residues: Acyl-homoserine lactone acylase PvdQ (772 aa).

The signal sequence occupies residues 1-28 (MPVFPFCRPMTCAGLAAALVAFSVGVQA). The propeptide at 199–220 (AQSSAGFASALARQERFAAERG) is spacer peptide. The active-site Nucleophile is the Ser221.

This sequence belongs to the peptidase S45 family. As to quaternary structure, heterodimer of an alpha subunit and a beta subunit processed from the same precursor.

Its subcellular location is the periplasm. It carries out the reaction an N-acyl-L-homoserine lactone + H2O = L-homoserine lactone + a carboxylate. Catalyzes the deacylation of acyl-homoserine lactone (AHL or acyl-HSL), releasing homoserine lactone (HSL) and the corresponding fatty acid. Possesses a specificity for the degradation of long-chain acyl-HSLs (side chains of 11 to 14 carbons in length). The protein is Acyl-homoserine lactone acylase PvdQ (pvdQ) of Pseudomonas putida (strain ATCC 47054 / DSM 6125 / CFBP 8728 / NCIMB 11950 / KT2440).